The following is a 229-amino-acid chain: Potassium/proton antiporter CemA (229 aa).

3 helical membrane-spanning segments follow: residues A6–C26, I107–G127, and I189–I209.

It belongs to the CemA family.

It is found in the plastid. It localises to the chloroplast inner membrane. It carries out the reaction K(+)(in) + H(+)(out) = K(+)(out) + H(+)(in). Its function is as follows. Contributes to K(+)/H(+) antiport activity by supporting proton efflux to control proton extrusion and homeostasis in chloroplasts in a light-dependent manner to modulate photosynthesis. Prevents excessive induction of non-photochemical quenching (NPQ) under continuous-light conditions. Indirectly promotes efficient inorganic carbon uptake into chloroplasts. The protein is Potassium/proton antiporter CemA of Arabidopsis thaliana (Mouse-ear cress).